The following is a 189-amino-acid chain: Small ribosomal subunit protein uS5 (189 aa).

The 64-residue stretch at 20-83 (FVDRLVHINR…ESAKRALIRV (64 aa)) folds into the S5 DRBM domain.

Belongs to the universal ribosomal protein uS5 family. As to quaternary structure, part of the 30S ribosomal subunit. Contacts proteins S4 and S8.

Its function is as follows. With S4 and S12 plays an important role in translational accuracy. Located at the back of the 30S subunit body where it stabilizes the conformation of the head with respect to the body. The chain is Small ribosomal subunit protein uS5 from Beijerinckia indica subsp. indica (strain ATCC 9039 / DSM 1715 / NCIMB 8712).